The sequence spans 482 residues: Keratin, type I cytoskeletal 39 (482 aa).

The disordered stretch occupies residues 1–24 (MDTKGSTVTISSSTPPQNCSGNTN). The segment at 1 to 91 (MDTKGSTVTI…RCTEGINTHE (91 aa)) is head. The IF rod domain occupies 91-402 (EKETMQILNE…SLLESLDGRL (312 aa)). Residues 92 to 126 (KETMQILNERLANYLEKVRMLEGENADLEDKIQEA) are coil 1A. Positions 127–137 (CSKALPILCPD) are linker 1. The segment at 138-238 (YLSYYTTIEE…HEEEVNSLQC (101 aa)) is coil 1B. Residues 239–254 (QLGDRINIEVTAAPSV) are linker 12. A coil 2 region spans residues 255–398 (DLNQILQEMR…ATYRSLLESL (144 aa)). The tract at residues 399–482 (DGRLPCNPCA…PCYITRATKV (84 aa)) is tail.

Belongs to the intermediate filament family. In terms of assembly, heterotetramer of two type I and two type II keratins.

Functionally, may play a role in late hair differentiation. The chain is Keratin, type I cytoskeletal 39 (Krt39) from Mus musculus (Mouse).